The sequence spans 211 residues: RING finger protein narya (211 aa).

The RING-type zinc-finger motif lies at cysteine 6–cysteine 47. The interval arginine 149–leucine 211 is disordered. Residues serine 153–glutamate 165 are compositionally biased toward basic and acidic residues. Over residues serine 172–aspartate 184 the composition is skewed to low complexity.

As to quaternary structure, may interact with itself, with nenya and vilya through its RING-type zinc finger. In terms of tissue distribution, expressed in nurse cell and pro-oocytes (at protein level).

The protein resides in the chromosome. Required for the formation of DNA double-strand breaks (DSBs) together with nenya and vilya during the meiotic recombination process. Plays a role in DSBs processing into crossovers. Plays a redundant role with nenya in chromosome segregation during female meiosis. The chain is RING finger protein narya from Drosophila melanogaster (Fruit fly).